Consider the following 189-residue polypeptide: MGLLDAGFSRDNVLVAPVDAVLNWARLSSLWPMGFGLACCAIEMMATNASNYDLERFGIFPRSSPRQSDLMIVAGTVSMKMAERVVRLYEQMPEPRYVLSMGSCSNCGGPYWEHGYHVLKGVDRVIPVDVYVPGCPPRPEALIGGLMKVQELIRMEQIGMSRQEALKKLAETGVEPRPFIERERSSAGA.

Residues cysteine 39, cysteine 40, cysteine 104, and cysteine 135 each contribute to the [4Fe-4S] cluster site.

This sequence belongs to the complex I 20 kDa subunit family. In terms of assembly, NDH-1 is composed of 14 different subunits. Subunits NuoB, C, D, E, F, and G constitute the peripheral sector of the complex. It depends on [4Fe-4S] cluster as a cofactor.

Its subcellular location is the cell inner membrane. The enzyme catalyses a quinone + NADH + 5 H(+)(in) = a quinol + NAD(+) + 4 H(+)(out). In terms of biological role, NDH-1 shuttles electrons from NADH, via FMN and iron-sulfur (Fe-S) centers, to quinones in the respiratory chain. The immediate electron acceptor for the enzyme in this species is believed to be a menaquinone. Couples the redox reaction to proton translocation (for every two electrons transferred, four hydrogen ions are translocated across the cytoplasmic membrane), and thus conserves the redox energy in a proton gradient. In Chlorobium luteolum (strain DSM 273 / BCRC 81028 / 2530) (Pelodictyon luteolum), this protein is NADH-quinone oxidoreductase subunit B.